Reading from the N-terminus, the 1442-residue chain is ABC transporter G family member 35 (1442 aa).

The ABC transporter 1 domain occupies 169 to 442 (LGMIGIRLAK…FESFGFKCPE (274 aa)). 202–209 (GPPSSGKT) is an ATP binding site. An ABC transmembrane type-2 1 domain is found at 520–733 (ELLKSCWDKE…AFNAITVNEL (214 aa)). 7 helical membrane passes run 538–558 (FFYVFKTVQIIIIAAITSTLY), 573–593 (IYVGSLLFAMIVNMFNGLAEM), 619–639 (LPTFLLGIPISIFESTAWMVV), 657–677 (FLIIFLIQQMAAGIFRFIAST), 683–703 (IANTGGVLVLLVVFLTGGFLL), 714–734 (WAYWISPLSYAFNAITVNELF), and 769–789 (IGVGGLLGFTVIFNGFFTLAL). The 253-residue stretch at 840–1092 (MSFDDVKYFV…KVVEYFESFP (253 aa)) folds into the ABC transporter 2 domain. Residue 885-892 (GVSGAGKT) coordinates ATP. The ABC transmembrane type-2 2 domain occupies 1165–1379 (GQFKSCLWKQ…TIYGLITSQY (215 aa)). 7 consecutive transmembrane segments (helical) span residues 1186-1206 (LVRFIFTLATSLMIGSVFWQI), 1218-1238 (MVIGAIYAAVVFVGINNCSTV), 1272-1292 (LPYVLIQTTYYSLIIYSMVGF), 1299-1319 (FLWFIFINYFSFLYWTYYGMM), 1329-1349 (VASIFASAFYGIFNLFSGFFI), 1357-1377 (WWVWYYWICPVAWTIYGLITS), and 1414-1434 (PVAGVLVGFTVFFAFIFAFCI).

Belongs to the ABC transporter superfamily. ABCG family. PDR (TC 3.A.1.205) subfamily. As to expression, ubiquitous with higher levels in roots.

It is found in the membrane. In terms of biological role, may be a general defense protein. The sequence is that of ABC transporter G family member 35 (ABCG35) from Arabidopsis thaliana (Mouse-ear cress).